Consider the following 278-residue polypeptide: Large ribosomal subunit protein uL2 (278 aa).

Disordered regions lie at residues Leu33–Gly53 and Leu219–Arg278. Over residues Ile269 to Arg278 the composition is skewed to basic residues.

Belongs to the universal ribosomal protein uL2 family. As to quaternary structure, part of the 50S ribosomal subunit. Forms a bridge to the 30S subunit in the 70S ribosome.

In terms of biological role, one of the primary rRNA binding proteins. Required for association of the 30S and 50S subunits to form the 70S ribosome, for tRNA binding and peptide bond formation. It has been suggested to have peptidyltransferase activity; this is somewhat controversial. Makes several contacts with the 16S rRNA in the 70S ribosome. This Sphingopyxis alaskensis (strain DSM 13593 / LMG 18877 / RB2256) (Sphingomonas alaskensis) protein is Large ribosomal subunit protein uL2.